Here is a 227-residue protein sequence, read N- to C-terminus: Cytochrome c oxidase subunit 2 (227 aa).

The Mitochondrial intermembrane segment spans residues 1–14; sequence MAYPFQLGLQDATS. A helical membrane pass occupies residues 15–45; sequence PIMEELTNFHDHTLMIVFLISSLVLYIISLM. The Mitochondrial matrix portion of the chain corresponds to 46–59; it reads LTTKLTHTSTMDAQ. A helical membrane pass occupies residues 60–87; that stretch reads EVETIWTILPAAILVLIALPSLRILYMM. The Mitochondrial intermembrane portion of the chain corresponds to 88 to 227; that stretch reads DEINNPVLTV…YFESWSASMI (140 aa). 6 residues coordinate Cu cation: H161, C196, E198, C200, H204, and M207. E198 serves as a coordination point for Mg(2+). Y218 carries the phosphotyrosine modification.

It belongs to the cytochrome c oxidase subunit 2 family. In terms of assembly, component of the cytochrome c oxidase (complex IV, CIV), a multisubunit enzyme composed of 14 subunits. The complex is composed of a catalytic core of 3 subunits MT-CO1, MT-CO2 and MT-CO3, encoded in the mitochondrial DNA, and 11 supernumerary subunits COX4I, COX5A, COX5B, COX6A, COX6B, COX6C, COX7A, COX7B, COX7C, COX8 and NDUFA4, which are encoded in the nuclear genome. The complex exists as a monomer or a dimer and forms supercomplexes (SCs) in the inner mitochondrial membrane with NADH-ubiquinone oxidoreductase (complex I, CI) and ubiquinol-cytochrome c oxidoreductase (cytochrome b-c1 complex, complex III, CIII), resulting in different assemblies (supercomplex SCI(1)III(2)IV(1) and megacomplex MCI(2)III(2)IV(2)). Found in a complex with TMEM177, COA6, COX18, COX20, SCO1 and SCO2. Interacts with TMEM177 in a COX20-dependent manner. Interacts with COX20. Interacts with COX16. Cu cation is required as a cofactor.

The protein resides in the mitochondrion inner membrane. It carries out the reaction 4 Fe(II)-[cytochrome c] + O2 + 8 H(+)(in) = 4 Fe(III)-[cytochrome c] + 2 H2O + 4 H(+)(out). In terms of biological role, component of the cytochrome c oxidase, the last enzyme in the mitochondrial electron transport chain which drives oxidative phosphorylation. The respiratory chain contains 3 multisubunit complexes succinate dehydrogenase (complex II, CII), ubiquinol-cytochrome c oxidoreductase (cytochrome b-c1 complex, complex III, CIII) and cytochrome c oxidase (complex IV, CIV), that cooperate to transfer electrons derived from NADH and succinate to molecular oxygen, creating an electrochemical gradient over the inner membrane that drives transmembrane transport and the ATP synthase. Cytochrome c oxidase is the component of the respiratory chain that catalyzes the reduction of oxygen to water. Electrons originating from reduced cytochrome c in the intermembrane space (IMS) are transferred via the dinuclear copper A center (CU(A)) of subunit 2 and heme A of subunit 1 to the active site in subunit 1, a binuclear center (BNC) formed by heme A3 and copper B (CU(B)). The BNC reduces molecular oxygen to 2 water molecules using 4 electrons from cytochrome c in the IMS and 4 protons from the mitochondrial matrix. This chain is Cytochrome c oxidase subunit 2 (MT-CO2), found in Conilurus penicillatus (Brush-tailed rabbit-rat).